A 223-amino-acid chain; its full sequence is Killer cell lectin-like receptor subfamily B member 1B allele A (223 aa).

Residues 1-43 (MDSTTLVYADLNLARIQEPKHDSPPSLSPDTCRCPRWHRLALK) lie on the Cytoplasmic side of the membrane. Residues 6–11 (LVYADL) carry the ITIM motif motif. The LCK-binding motif signature appears at 32 to 35 (CRCP). A helical; Signal-anchor for type II membrane protein membrane pass occupies residues 44-63 (FGCAGLILLVLVVIGLCVLV). Topologically, residues 64 to 223 (LSVQKSSVQK…LNHETPSNDS (160 aa)) are extracellular. Residues 93–212 (ECPQDWLSHR…STDNRWICQK (120 aa)) form the C-type lectin domain. 2 disulfide bridges follow: Cys-122–Cys-210 and Cys-189–Cys-202.

In terms of assembly, homodimer; disulfide-linked. Interacts with tyrosine kinase LCK. Binds PTPN6/SHP-1 in a phosphorylation-dependent manner. Expressed in NK cells and a subset of T-cells.

Its subcellular location is the membrane. Receptor for CLEC2D/OCIL. Ligand-binding contributes to inhibition of cytotoxic natural killer (NK) cells. May mediate MHC class I-independent 'missing-self' recognition of allografts, tumor cells and virus-infected cells. The protein is Killer cell lectin-like receptor subfamily B member 1B allele A (Klrb1b) of Mus musculus (Mouse).